The chain runs to 219 residues: Small ribosomal subunit protein uS3c (219 aa).

Residues I39–F111 form the KH type-2 domain.

Belongs to the universal ribosomal protein uS3 family. As to quaternary structure, part of the 30S ribosomal subunit.

The protein resides in the plastid. This is Small ribosomal subunit protein uS3c (rps3) from Euglena longa (Euglenophycean alga).